Consider the following 112-residue polypeptide: UPF0342 protein SP_1372 (112 aa).

This sequence belongs to the UPF0342 family.

In Streptococcus pneumoniae serotype 4 (strain ATCC BAA-334 / TIGR4), this protein is UPF0342 protein SP_1372.